A 512-amino-acid polypeptide reads, in one-letter code: Cytochrome P450 monooxygenase FrzL (512 aa).

A helical membrane pass occupies residues Thr-6 to Tyr-26. Heme is bound at residue Cys-423.

This sequence belongs to the cytochrome P450 family. Requires heme as cofactor.

It localises to the membrane. Cytochrome P450 monooxygenase; part of the gene cluster that mediates the biosynthesis of the alkaloid (-)-FR901483, a potent immunosuppressant that shows efficacy in animal models and a probable inhibitor of purine nucleotide biosynthesis by targeting phosphoribosylpyrophosphate amidotransferase (PPAT). The only unassigned enzyme in the cluster is the second cytochrome P450 monooxygenase FrzL. The biosynthesis of (-)-FR901483 starts with the condensation of two L-tyrosines to yield (S,S)-dityrosyl-piperazine. This process occurs in 3 steps with the non-canonical nonribosomal peptide synthetase FrzA catalyzing the reduction of L-tyrosine into L-tyrosinal, the spontaneous condensation of 2 L-tyrosinal units, and the subsequent reduction by the NmrA-like family domain-containing oxidoreductase FrzB. The cytochrome P450 monooxygenase FrzC then performs coupling between N10 and C1' to morph the piperazine into a 1,4-diazabicyclo[3.2.1]octane spiro-fused to a 2,5-cyclohexadienone. The dienone portion is further reduced to cyclohexanone by the flavin-dependent reductase FrzD. The methyltranserases (MTs) FrzE and FrzF are then involved in the methylation at the C10' amine and the C4 phenolic oxygen, respectively. The order of the two MTs appear to be interchangeable. Cleavage of the C9-N10' bond by the dioxygenase FrzG then leads to formation of a conjugated iminium. In addition to the oxidation of C9, an additional dehydrogenation between C7 and C8 can occur to give a likely shunt product. The next biosynthetic step is the intramolecular aldol condensation catalyzed by the newly identified aldolase FrzH to yield an aza-tricyclic product with the formation of a C9-C3' bond. The short-chain dehydrogenase/reductase FrzI then produces dephospho-(-)-FR901483 that is phosphorylated at C4'-OH into (-)-FR901483 by the phosphotransferase FrzJ. The sequence is that of Cytochrome P450 monooxygenase FrzL from Cladobotryum sp.